Consider the following 643-residue polypeptide: MNPNTPADVYYGQMSQGSSMPVTTVPSHSHYASQQPPPLLQPGSTYAHQYGTPQYGYANALSSPASIPPSLPPSMNSMAGQSVLPLPGSGSMNPAVYASGGFDTTGQVAPPGMKPRVTATLWEDEGSLCFQVEARGICVARREDNAMINGTKLLNVAGMTRGRRDGILKSEKVRHVVKIGPMHLKGVWIPFERALDFANKEKITELLYPLFVHNIGALLYHPTNQSRTSQVMAAAEQRRKDSHGQLRGPPGLPSLQQHHHHHSMLPGPPSLPSHPSMGRPALDRAHTFPTPPTSASSVMGPMGNSDGYQWSQQSMSGTQGNSSLSLDTSLGSNARSMPSTPATTPPGSTIQSMQNYPPVSQSYESSRQMYQGQSAQQAQYQSQQHYSSQPQHQERPVYSQSSYIKNDMGPPSGRPTGQSNDASDSKPPTGMIHQGQGQSDPGTHAGSEEDDDANNEAEYTHDSGGYDANRGSYNYNTQAVNSLPHDHGLAPEIGGSPHQAGSGRATPRTAAAPSSYYSAQGYHTPPRGQPSSSLYNVMSNERTGSNGTQGNEMYAGQADMPSSLPNGYSAQPSVMNGSSGGLKRGRDDDDDGGRPTTSAPNLGPGMDMKRRKTMMDGGSLPSPTYTATIAQAAPSAIAAHRRR.

Residues M1–P37 form a disordered region. Over residues Q13–S33 the composition is skewed to polar residues. The HTH APSES-type domain occupies R116–P222. A DNA-binding region (H-T-H motif) is located at residues G150 to E171. The disordered stretch occupies residues S229–A627. The span at D306 to R335 shows a compositional bias: polar residues. A compositionally biased stretch (low complexity) spans S336–T349. A compositionally biased stretch (polar residues) spans I350–R367. Over residues Q368–Q391 the composition is skewed to low complexity. Polar residues-rich tracts occupy residues G471 to N481, Q529 to N551, and S563 to G577. Residues K583–K612 form a nuclear localization domain region.

Belongs to the EFG1/PHD1/stuA family.

The protein resides in the nucleus. In terms of biological role, transcription factor that regulates asexual reproduction. Binds the StuA-response elements (StRE) with the consensus sequence 5'-(A/T)CGCG(T/A)N(A/C)-3' at the promoters of target genes. Required for rapid conidial germination, normal vegetative morphology, and protoperithecium formation. This chain is Cell pattern formation-associated protein asm-1, found in Neurospora crassa (strain ATCC 24698 / 74-OR23-1A / CBS 708.71 / DSM 1257 / FGSC 987).